We begin with the raw amino-acid sequence, 118 residues long: Large ribosomal subunit protein bL20 (118 aa).

It belongs to the bacterial ribosomal protein bL20 family.

Its function is as follows. Binds directly to 23S ribosomal RNA and is necessary for the in vitro assembly process of the 50S ribosomal subunit. It is not involved in the protein synthesizing functions of that subunit. The chain is Large ribosomal subunit protein bL20 from Pseudomonas aeruginosa (strain LESB58).